The following is a 158-amino-acid chain: Proteinase inhibitor type-2 (158 aa).

The first 24 residues, 1-24 (MAIHKEVSFLAYLLVLGMLLFVSA), serve as a signal peptide directing secretion. A run of 2 repeats spans residues 29-86 (DAKA…HPKN) and 87-146 (PKAC…IEPK). 8 disulfides stabilise this stretch: C33-C121, C37-C117, C45-C127, C57-C94, C60-C78, C61-C90, C67-C103, and C120-C138.

This sequence belongs to the protease inhibitor I20 (potato type II proteinase inhibitor) family.

The protein is Proteinase inhibitor type-2 of Solanum tuberosum (Potato).